Consider the following 685-residue polypeptide: MLLSLLNSARLRPELLILVLMVMIISMFVIPLPTYLVDFLIALNIVLAILVFMGSFYIDRILSFSTFPAVLLITTLFRLALSISTSRLILIEADAGEIIATFGQFVIGDSLAVGFVVFSIVTVVQFIVITKGSERVAEVAARFSLDGMPGKQMSIDADLKAGIIDADAARERRSVLERESQLYGSFDGAMKFIKGDAIAGIIIIFVNFIGGISVGMTRHGMDLSSALSTYTMLTIGDGLVAQIPALLIAISAGFIVTRVNGDSDNMGRNIMTQLLNNPFVLVVTAILTISMGTLPGFPLPVFVILSVVLSVLFYFKFREAKRSAAKPKTSKGEQPLSIEEKEGSSLGLIGDLDKVSTETVPLILLVPKSRREDLEKAQLAERLRSQFFIDYGVRLPEVLLRDGEGLDDNSIVLLINEIRVEQFTVYFDLMRVVNYSDEVVSFGINPTIHQQGSSQYFWVTHEEGEKLRELGYVLRNALDELYHCLAVTLARNVNEYFGIQETKHMLDQLEAKFPDLLKEVLRHATVQRISEVLQRLLSERVSVRNMKLIMEALALWAPREKDVINLVEHIRGAMARYICHKFANGGELRAVMVSAEVEDVIRKGIRQTSGSTFLSLDPEASANLMDLITLKLDDLLIAHKDLVLLTSVDVRRFIKKMIEGRFPDLEVLSFGEIADSKSVNVIKTI.

A run of 8 helical transmembrane segments spans residues 17–37 (ILVLMVMIISMFVIPLPTYLV), 39–59 (FLIALNIVLAILVFMGSFYID), 61–81 (ILSFSTFPAVLLITTLFRLAL), 110–130 (SLAVGFVVFSIVTVVQFIVIT), 197–217 (AIAGIIIIFVNFIGGISVGMT), 235–255 (IGDGLVAQIPALLIAISAGFI), 274–294 (LLNNPFVLVVTAILTISMGTL), and 295–315 (PGFPLPVFVILSVVLSVLFYF).

Belongs to the FHIPEP (flagella/HR/invasion proteins export pore) family.

Its subcellular location is the cell inner membrane. In terms of biological role, involved in the invasion of the cells of the intestinal epithelium. Could be involved in the translocation of the InvE protein. This is Invasion protein InvA (invA) from Salmonella typhi.